The primary structure comprises 333 residues: Ribonucleoside-diphosphate reductase small chain B (333 aa).

Fe cation is bound by residues Asp76, Glu107, and His110. The active site involves Tyr114. Fe cation-binding residues include Glu169, Glu203, and His206.

This sequence belongs to the ribonucleoside diphosphate reductase small chain family. In terms of assembly, heterodimer of a large and a small chain. It depends on Fe cation as a cofactor. As to expression, expressed in roots, rosette leaves, stems and flowers.

Its subcellular location is the cytoplasm. It carries out the reaction a 2'-deoxyribonucleoside 5'-diphosphate + [thioredoxin]-disulfide + H2O = a ribonucleoside 5'-diphosphate + [thioredoxin]-dithiol. Functionally, provides the precursors necessary for DNA synthesis. Catalyzes the biosynthesis of deoxyribonucleotides from the corresponding ribonucleotides. This Arabidopsis thaliana (Mouse-ear cress) protein is Ribonucleoside-diphosphate reductase small chain B (RNR2B).